We begin with the raw amino-acid sequence, 362 residues long: Notoamide biosynthesis cluster protein J' (362 aa).

Residues 1 to 22 (MRNMATMLHLLTLILLTSPAST) form the signal peptide. Residues asparagine 157, asparagine 190, asparagine 280, and asparagine 338 are each glycosylated (N-linked (GlcNAc...) asparagine).

Functionally, part of the gene cluster that mediates the biosynthesis of notoamide, a fungal indole alkaloid that belongs to a family of natural products containing a characteristic bicyclo[2.2.2]diazaoctane core. The first step of notoamide biosynthesis involves coupling of L-proline and L-tryptophan by the bimodular NRPS notE', to produce cyclo-L-tryptophan-L-proline called brevianamide F. The reverse prenyltransferase notF' then acts as a deoxybrevianamide E synthase and converts brevianamide F to deoxybrevianamide E via reverse prenylation at C-2 of the indole ring leading to the bicyclo[2.2.2]diazaoctane core. Deoxybrevianamide E is further hydroxylated at C-6 of the indole ring, likely catalyzed by the cytochrome P450 monooxygenase notG', to yield 6-hydroxy-deoxybrevianamide E. 6-hydroxy-deoxybrevianamide E is a specific substrate of the prenyltransferase notC' for normal prenylation at C-7 to produce 6-hydroxy-7-prenyl-deoxybrevianamide, also called notoamide S. As the proposed pivotal branching point in notoamide biosynthesis, notoamide S can be diverted to notoamide E through an oxidative pyran ring closure putatively catalyzed by either notH' cytochrome P450 monooxygenase or the notD' FAD-linked oxidoreductase. This step would be followed by an indole 2,3-epoxidation-initiated pinacol-like rearrangement catalyzed by the notB' FAD-dependent monooxygenase leading to the formation of notoamide C and notoamide D. On the other hand notoamide S is converted to notoamide T by notH' (or notD'), a bifunctional oxidase that also functions as the intramolecular Diels-Alderase responsible for generation of (-)-notoamide T. To generate antipodal (+)-notoaminide T, notH (or notD) in Aspergillus strain MF297-2 is expected to catalyze a Diels-Alder reaction leading to the opposite stereochemistry. The remaining oxidoreductase notD' (or notH') likely catalyzes the oxidative pyran ring formation to yield (-)-stephacidin A. The FAD-dependent monooxygenase notI' is highly similar to notB' and is predicted to catalyze a similar conversion from (-)-stephacidin A to (+)-notoamide B via the 2,3-epoxidation of (-)-stephacidin A followed by a pinacol-type rearrangement. Finally, it remains unclear which enzyme could be responsible for the final hydroxylation steps leading to notoamide A and sclerotiamide. The function of notJ' in the notoamide biosynthesis has not been determined yet. The sequence is that of Notoamide biosynthesis cluster protein J' from Aspergillus versicolor.